Here is an 876-residue protein sequence, read N- to C-terminus: Alanine--tRNA ligase (876 aa).

Residues His-565, His-569, Cys-667, and His-671 each contribute to the Zn(2+) site.

Belongs to the class-II aminoacyl-tRNA synthetase family. Requires Zn(2+) as cofactor.

It is found in the cytoplasm. The enzyme catalyses tRNA(Ala) + L-alanine + ATP = L-alanyl-tRNA(Ala) + AMP + diphosphate. Catalyzes the attachment of alanine to tRNA(Ala) in a two-step reaction: alanine is first activated by ATP to form Ala-AMP and then transferred to the acceptor end of tRNA(Ala). Also edits incorrectly charged Ser-tRNA(Ala) and Gly-tRNA(Ala) via its editing domain. This Staphylococcus saprophyticus subsp. saprophyticus (strain ATCC 15305 / DSM 20229 / NCIMB 8711 / NCTC 7292 / S-41) protein is Alanine--tRNA ligase.